The following is a 194-amino-acid chain: Exopolysaccharide II synthesis transcriptional activator ExpG (194 aa).

In terms of domain architecture, HTH marR-type spans 49–184; sequence YFELARVMER…AFQTLHRLEL (136 aa).

In terms of biological role, transcriptional activator of genes for galactoglucan synthesis (exopolysaccharide II or EPS II). The sequence is that of Exopolysaccharide II synthesis transcriptional activator ExpG (expG) from Rhizobium meliloti (strain 1021) (Ensifer meliloti).